A 236-amino-acid polypeptide reads, in one-letter code: Proteasome subunit alpha (236 aa).

It belongs to the peptidase T1A family. As to quaternary structure, the 20S proteasome core is composed of 14 alpha and 14 beta subunits that assemble into four stacked heptameric rings, resulting in a barrel-shaped structure. The two inner rings, each composed of seven catalytic beta subunits, are sandwiched by two outer rings, each composed of seven alpha subunits. The catalytic chamber with the active sites is on the inside of the barrel. Has a gated structure, the ends of the cylinder being occluded by the N-termini of the alpha-subunits. Is capped by the proteasome-associated ATPase, ARC.

It localises to the cytoplasm. Its pathway is protein degradation; proteasomal Pup-dependent pathway. The formation of the proteasomal ATPase ARC-20S proteasome complex, likely via the docking of the C-termini of ARC into the intersubunit pockets in the alpha-rings, may trigger opening of the gate for substrate entry. Interconversion between the open-gate and close-gate conformations leads to a dynamic regulation of the 20S proteasome proteolysis activity. Component of the proteasome core, a large protease complex with broad specificity involved in protein degradation. The protein is Proteasome subunit alpha of Pseudarthrobacter chlorophenolicus (strain ATCC 700700 / DSM 12829 / CIP 107037 / JCM 12360 / KCTC 9906 / NCIMB 13794 / A6) (Arthrobacter chlorophenolicus).